Consider the following 278-residue polypeptide: Large ribosomal subunit protein uL2 (278 aa).

The disordered stretch occupies residues 212-278 (NRHRGIRPQT…IISRKKHKKG (67 aa)). Over residues 257-278 (YKTRKKKASDKLIISRKKHKKG) the composition is skewed to basic residues.

This sequence belongs to the universal ribosomal protein uL2 family. As to quaternary structure, part of the 50S ribosomal subunit. Forms a bridge to the 30S subunit in the 70S ribosome.

In terms of biological role, one of the primary rRNA binding proteins. Required for association of the 30S and 50S subunits to form the 70S ribosome, for tRNA binding and peptide bond formation. It has been suggested to have peptidyltransferase activity; this is somewhat controversial. Makes several contacts with the 16S rRNA in the 70S ribosome. The chain is Large ribosomal subunit protein uL2 from Helicobacter pylori (strain Shi470).